Consider the following 390-residue polypeptide: Probable galacturonosyltransferase-like 9 (390 aa).

At 1–10 the chain is on the cytoplasmic side; it reads MRLRFPMKSA. A helical; Signal-anchor for type II membrane protein membrane pass occupies residues 11–31; that stretch reads VLAFAIFLVFIPLFSVGIRMI. Over 32 to 390 the chain is Lumenal; sequence PGRLTAVSAT…SELTEDSSFF (359 aa). N-linked (GlcNAc...) asparagine glycosylation is found at asparagine 205 and asparagine 223.

It belongs to the glycosyltransferase 8 family.

It localises to the golgi apparatus membrane. Its pathway is glycan metabolism; pectin biosynthesis. In terms of biological role, may be involved in pectin and/or xylans biosynthesis in cell walls. This is Probable galacturonosyltransferase-like 9 (GATL9) from Arabidopsis thaliana (Mouse-ear cress).